The chain runs to 269 residues: Gem-associated protein 2 (269 aa).

Phosphoserine is present on residues Ser-70 and Ser-155.

It belongs to the gemin-2 family. In terms of assembly, monomer. Part of the core SMN complex that contains SMN1, GEMIN2/SIP1, DDX20/GEMIN3, GEMIN4, GEMIN5, GEMIN6, GEMIN7, GEMIN8 and STRAP/UNRIP. Part of the SMN-Sm complex that contains SMN1, GEMIN2/SIP1, DDX20/GEMIN3, GEMIN4, GEMIN5, GEMIN6, GEMIN7, GEMIN8, STRAP/UNRIP and the Sm proteins SNRPB, SNRPD1, SNRPD2, SNRPD3, SNRPE, SNRPF and SNRPG. Interacts with GEMIN5; the interaction is direct. Interacts (via C-terminus) with SMN1; the interaction is direct. Interacts with SNRPD1; the interaction is direct. Interacts with SNRPD2; the interaction is direct. Interacts (via N-terminus) with SNRPF; the interaction is direct. Interacts (via N-terminus) with SNRPE; the interaction is direct. Interacts (via N-terminus) with SNRPG; the interaction is direct.

The protein localises to the nucleus. Its subcellular location is the gem. It is found in the cytoplasm. The SMN complex catalyzes the assembly of small nuclear ribonucleoproteins (snRNPs), the building blocks of the spliceosome, and thereby plays an important role in the splicing of cellular pre-mRNAs. Most spliceosomal snRNPs contain a common set of Sm proteins SNRPB, SNRPD1, SNRPD2, SNRPD3, SNRPE, SNRPF and SNRPG that assemble in a heptameric protein ring on the Sm site of the small nuclear RNA to form the core snRNP (Sm core). In the cytosol, the Sm proteins SNRPD1, SNRPD2, SNRPE, SNRPF and SNRPG (5Sm) are trapped in an inactive 6S pICln-Sm complex by the chaperone CLNS1A that controls the assembly of the core snRNP. To assemble core snRNPs, the SMN complex accepts the trapped 5Sm proteins from CLNS1A. Binding of snRNA inside 5Sm ultimately triggers eviction of the SMN complex, thereby allowing binding of SNRPD3 and SNRPB to complete assembly of the core snRNP. Within the SMN complex, GEMIN2 constrains the conformation of 5Sm, thereby promoting 5Sm binding to snRNA containing the snRNP code (a nonameric Sm site and a 3'-adjacent stem-loop), thus preventing progression of assembly until a cognate substrate is bound. The chain is Gem-associated protein 2 from Mus musculus (Mouse).